The following is a 344-amino-acid chain: Eukaryotic translation initiation factor 2 subunit alpha homolog (344 aa).

Residues aspartate 21–arginine 92 form the S1 motif domain. Phosphoserine; by GCN2 is present on serine 56. Residues aspartate 312–glutamate 344 are disordered. Acidic residues predominate over residues glutamate 314–leucine 336.

The protein belongs to the eIF-2-alpha family. In terms of assembly, heterotrimer composed of an alpha, a beta and a gamma chain. Post-translationally, phosphorylated at Ser-56 by GCN2.

In terms of biological role, functions in the early steps of protein synthesis by forming a ternary complex with GTP and initiator tRNA. This complex binds to a 40S ribosomal subunit, followed by mRNA binding to form a 43S pre-initiation complex. Junction of the 60S ribosomal subunit to form the 80S initiation complex is preceded by hydrolysis of the GTP bound to eIF-2 and release of an eIF-2-GDP binary complex. In order for eIF-2 to recycle and catalyze another round of initiation, the GDP bound to eIF-2 must exchange with GTP by way of a reaction catalyzed by eIF-2B. The sequence is that of Eukaryotic translation initiation factor 2 subunit alpha homolog from Arabidopsis thaliana (Mouse-ear cress).